Consider the following 246-residue polypeptide: UDP-N-acetyl-D-mannosaminuronic acid transferase (246 aa).

The protein belongs to the glycosyltransferase 26 family.

The enzyme catalyses UDP-N-acetyl-alpha-D-mannosaminouronate + N-acetyl-alpha-D-glucosaminyl-di-trans,octa-cis-undecaprenyl diphosphate = beta-D-ManNAcA-(1-&gt;4)-alpha-D-GlcNAc-di-trans,octa-cis-undecaprenyl diphosphate + UDP + H(+). It participates in bacterial outer membrane biogenesis; enterobacterial common antigen biosynthesis. In terms of biological role, catalyzes the synthesis of Und-PP-GlcNAc-ManNAcA (Lipid II), the second lipid-linked intermediate involved in enterobacterial common antigen (ECA) synthesis. This Salmonella choleraesuis (strain SC-B67) protein is UDP-N-acetyl-D-mannosaminuronic acid transferase.